Consider the following 468-residue polypeptide: Tapasin-related protein (468 aa).

Positions 1 to 18 (MGTQEGWCLLLCLALSGA) are cleaved as a signal peptide. At 19–405 (AETKPHPAEG…STQVVPPERR (387 aa)) the chain is on the lumenal side. In terms of domain architecture, Ig-like V-type spans 181 to 297 (PQGTVRTAVE…SLYRAQQIIQ (117 aa)). Cystine bridges form between cysteine 212–cysteine 283 and cysteine 321–cysteine 382. The region spanning 304–394 (PKVRLSLANE…THISLEEPLG (91 aa)) is the Ig-like C1-type domain. The helical transmembrane segment at 406–426 (TALGVIFASSLFLLALMFLGL) threads the bilayer. Topologically, residues 427–468 (QRRQAPTGLGLLQAERWETTSCADTQSSHLHEDRTARVSQPS) are cytoplasmic. The segment at 449-468 (ADTQSSHLHEDRTARVSQPS) is disordered.

In terms of assembly, interacts with peptide-free HLA-A*02-B2M complexes or those loaded with low affinity peptides, likely facilitating peptide exchange onto higher affinity peptides. Interacts with MR1 in a ligand-independent way; this interaction may stabilize MR1 pool and facilitate ligand loading and dissociation.

The protein resides in the cell membrane. It localises to the endoplasmic reticulum membrane. The protein localises to the microsome membrane. Its subcellular location is the golgi apparatus membrane. In terms of biological role, component of the antigen processing and presentation pathway, which binds to MHC class I coupled with beta2-microglobulin/B2M. Association between TAPBPR and MHC class I occurs in the absence of a functional peptide-loading complex (PLC). This Homo sapiens (Human) protein is Tapasin-related protein (TAPBPL).